Here is a 351-residue protein sequence, read N- to C-terminus: Lipopolysaccharide core biosynthesis mannosyltransferase LpsB (351 aa).

Belongs to the glycosyltransferase group 1 family. Glycosyltransferase 4 subfamily.

The protein operates within bacterial outer membrane biogenesis; LPS core biosynthesis. Functionally, acts at transfer of mannose group to a 3-deoxy-D-mono octulonic acid (KDO) via an alpha-1,5 linkage. In Rhizobium meliloti (strain 1021) (Ensifer meliloti), this protein is Lipopolysaccharide core biosynthesis mannosyltransferase LpsB (lpsB).